We begin with the raw amino-acid sequence, 94 residues long: MSIKENSYFAGGVKSLGFNQQGQDVSVGVMLPGEYTFGTQAPERMSVVKGALIVKKAGEVDWVTYNTGEFFEVEGSSSFELQVKDATAYLCEYL.

This sequence belongs to the nucleoside phosphorylase PpnP family.

The enzyme catalyses a purine D-ribonucleoside + phosphate = a purine nucleobase + alpha-D-ribose 1-phosphate. It catalyses the reaction adenosine + phosphate = alpha-D-ribose 1-phosphate + adenine. It carries out the reaction cytidine + phosphate = cytosine + alpha-D-ribose 1-phosphate. The catalysed reaction is guanosine + phosphate = alpha-D-ribose 1-phosphate + guanine. The enzyme catalyses inosine + phosphate = alpha-D-ribose 1-phosphate + hypoxanthine. It catalyses the reaction thymidine + phosphate = 2-deoxy-alpha-D-ribose 1-phosphate + thymine. It carries out the reaction uridine + phosphate = alpha-D-ribose 1-phosphate + uracil. The catalysed reaction is xanthosine + phosphate = alpha-D-ribose 1-phosphate + xanthine. Its function is as follows. Catalyzes the phosphorolysis of diverse nucleosides, yielding D-ribose 1-phosphate and the respective free bases. Can use uridine, adenosine, guanosine, cytidine, thymidine, inosine and xanthosine as substrates. Also catalyzes the reverse reactions. This chain is Pyrimidine/purine nucleoside phosphorylase, found in Vibrio campbellii (strain ATCC BAA-1116).